A 300-amino-acid polypeptide reads, in one-letter code: Spermatogenesis-associated serine-rich protein 1 (300 aa).

Polar residues predominate over residues 1 to 10 (MSPSMLTGNS). Disordered stretches follow at residues 1-42 (MSPS…MTEV) and 64-91 (TPSG…LPRV). The segment covering 27-42 (QLEKVPEKRDSGMTEV) has biased composition (basic and acidic residues). A compositionally biased stretch (low complexity) spans 64-85 (TPSGKSVSSSSSVETGPSVSEP). Ser113 carries the phosphoserine modification.

The chain is Spermatogenesis-associated serine-rich protein 1 (SPATS1) from Homo sapiens (Human).